A 142-amino-acid polypeptide reads, in one-letter code: Large ribosomal subunit protein uL11 (142 aa).

Belongs to the universal ribosomal protein uL11 family. As to quaternary structure, part of the ribosomal stalk of the 50S ribosomal subunit. Interacts with L10 and the large rRNA to form the base of the stalk. L10 forms an elongated spine to which L12 dimers bind in a sequential fashion forming a multimeric L10(L12)X complex. One or more lysine residues are methylated.

In terms of biological role, forms part of the ribosomal stalk which helps the ribosome interact with GTP-bound translation factors. This Bartonella quintana (strain Toulouse) (Rochalimaea quintana) protein is Large ribosomal subunit protein uL11.